The following is a 251-amino-acid chain: Zinc import ATP-binding protein ZnuC (251 aa).

In terms of domain architecture, ABC transporter spans 5-220 (VSLENVSVSF…PEFISMFGPR (216 aa)). 37–44 (GPNGAGKS) lines the ATP pocket.

The protein belongs to the ABC transporter superfamily. Zinc importer (TC 3.A.1.15.5) family. In terms of assembly, the complex is composed of two ATP-binding proteins (ZnuC), two transmembrane proteins (ZnuB) and a solute-binding protein (ZnuA).

Its subcellular location is the cell inner membrane. The enzyme catalyses Zn(2+)(out) + ATP(in) + H2O(in) = Zn(2+)(in) + ADP(in) + phosphate(in) + H(+)(in). Part of the ABC transporter complex ZnuABC involved in zinc import. Responsible for energy coupling to the transport system. The chain is Zinc import ATP-binding protein ZnuC from Salmonella typhi.